Reading from the N-terminus, the 221-residue chain is UPF0319 protein CGSHiEE_03630 (221 aa).

An N-terminal signal peptide occupies residues 1-21 (MKLRAVVLGLATLCTSTATFA).

The protein belongs to the UPF0319 family.

This chain is UPF0319 protein CGSHiEE_03630, found in Haemophilus influenzae (strain PittEE).